Consider the following 423-residue polypeptide: p-aminobenzoyl-glutamate hydrolase subunit A homolog (423 aa).

It belongs to the peptidase M20 family. Mn(2+) is required as a cofactor.

Its function is as follows. Catalyzes the cleavage of p-aminobenzoyl-glutamate (PABA-GLU) to form p-aminobenzoate (PABA) and glutamate. The protein is p-aminobenzoyl-glutamate hydrolase subunit A homolog (abgA) of Haemophilus influenzae (strain ATCC 51907 / DSM 11121 / KW20 / Rd).